Here is a 261-residue protein sequence, read N- to C-terminus: 5-oxoprolinase subunit A (261 aa).

This sequence belongs to the LamB/PxpA family. As to quaternary structure, forms a complex composed of PxpA, PxpB and PxpC.

It catalyses the reaction 5-oxo-L-proline + ATP + 2 H2O = L-glutamate + ADP + phosphate + H(+). Functionally, catalyzes the cleavage of 5-oxoproline to form L-glutamate coupled to the hydrolysis of ATP to ADP and inorganic phosphate. This is 5-oxoprolinase subunit A from Symbiobacterium thermophilum (strain DSM 24528 / JCM 14929 / IAM 14863 / T).